A 149-amino-acid polypeptide reads, in one-letter code: Large ribosomal subunit protein bL9 (149 aa).

This sequence belongs to the bacterial ribosomal protein bL9 family.

Its function is as follows. Binds to the 23S rRNA. The sequence is that of Large ribosomal subunit protein bL9 from Salmonella agona (strain SL483).